A 425-amino-acid chain; its full sequence is Glutamate-1-semialdehyde 2,1-aminomutase (425 aa).

An N6-(pyridoxal phosphate)lysine modification is found at K265.

The protein belongs to the class-III pyridoxal-phosphate-dependent aminotransferase family. HemL subfamily. In terms of assembly, homodimer. Pyridoxal 5'-phosphate is required as a cofactor.

Its subcellular location is the cytoplasm. The catalysed reaction is (S)-4-amino-5-oxopentanoate = 5-aminolevulinate. It functions in the pathway porphyrin-containing compound metabolism; protoporphyrin-IX biosynthesis; 5-aminolevulinate from L-glutamyl-tRNA(Glu): step 2/2. The sequence is that of Glutamate-1-semialdehyde 2,1-aminomutase from Desulfatibacillum aliphaticivorans.